The sequence spans 261 residues: 4-hydroxy-tetrahydrodipicolinate reductase (261 aa).

Position 9-14 (9-14 (GCLGRM)) interacts with NAD(+). R36 serves as a coordination point for NADP(+). Residues 97–99 (GTT) and 118–121 (SANM) each bind NAD(+). The Proton donor/acceptor role is filled by H151. H152 contacts (S)-2,3,4,5-tetrahydrodipicolinate. K155 serves as the catalytic Proton donor. Residue 161–162 (GT) coordinates (S)-2,3,4,5-tetrahydrodipicolinate.

It belongs to the DapB family.

Its subcellular location is the cytoplasm. It carries out the reaction (S)-2,3,4,5-tetrahydrodipicolinate + NAD(+) + H2O = (2S,4S)-4-hydroxy-2,3,4,5-tetrahydrodipicolinate + NADH + H(+). It catalyses the reaction (S)-2,3,4,5-tetrahydrodipicolinate + NADP(+) + H2O = (2S,4S)-4-hydroxy-2,3,4,5-tetrahydrodipicolinate + NADPH + H(+). It participates in amino-acid biosynthesis; L-lysine biosynthesis via DAP pathway; (S)-tetrahydrodipicolinate from L-aspartate: step 4/4. Catalyzes the conversion of 4-hydroxy-tetrahydrodipicolinate (HTPA) to tetrahydrodipicolinate. In Wolbachia pipientis wMel, this protein is 4-hydroxy-tetrahydrodipicolinate reductase.